A 259-amino-acid polypeptide reads, in one-letter code: 3-deoxy-manno-octulosonate cytidylyltransferase (259 aa).

The protein belongs to the KdsB family.

It localises to the cytoplasm. It catalyses the reaction 3-deoxy-alpha-D-manno-oct-2-ulosonate + CTP = CMP-3-deoxy-beta-D-manno-octulosonate + diphosphate. It participates in nucleotide-sugar biosynthesis; CMP-3-deoxy-D-manno-octulosonate biosynthesis; CMP-3-deoxy-D-manno-octulosonate from 3-deoxy-D-manno-octulosonate and CTP: step 1/1. It functions in the pathway bacterial outer membrane biogenesis; lipopolysaccharide biosynthesis. Its function is as follows. Activates KDO (a required 8-carbon sugar) for incorporation into bacterial lipopolysaccharide in Gram-negative bacteria. This is 3-deoxy-manno-octulosonate cytidylyltransferase from Xanthomonas axonopodis pv. citri (strain 306).